Consider the following 320-residue polypeptide: ATP-dependent 6-phosphofructokinase (320 aa).

Gly12 provides a ligand contact to ATP. Residues Arg22–Arg26 and Arg55–Asp60 each bind ADP. Residues Arg73 to Phe74 and Gly103 to Ser106 contribute to the ATP site. A Mg(2+)-binding site is contributed by Asp104. Residue Thr126–Asp128 coordinates substrate. Residue Asp128 is the Proton acceptor of the active site. Residue Arg155 participates in ADP binding. Substrate-binding positions include Arg163 and Met170–Arg172. ADP-binding positions include Gly186–Glu188, Lys212, and Lys214–His216. Substrate is bound by residues Glu223, Arg244, and His250–Arg253.

Belongs to the phosphofructokinase type A (PFKA) family. ATP-dependent PFK group I subfamily. Prokaryotic clade 'B1' sub-subfamily. In terms of assembly, homotetramer. Mg(2+) is required as a cofactor.

It localises to the cytoplasm. The catalysed reaction is beta-D-fructose 6-phosphate + ATP = beta-D-fructose 1,6-bisphosphate + ADP + H(+). It participates in carbohydrate degradation; glycolysis; D-glyceraldehyde 3-phosphate and glycerone phosphate from D-glucose: step 3/4. Its activity is regulated as follows. Allosterically activated by ADP and other diphosphonucleosides, and allosterically inhibited by phosphoenolpyruvate. Its function is as follows. Catalyzes the phosphorylation of D-fructose 6-phosphate to fructose 1,6-bisphosphate by ATP, the first committing step of glycolysis. This chain is ATP-dependent 6-phosphofructokinase, found in Buchnera aphidicola subsp. Acyrthosiphon pisum (strain 5A).